Reading from the N-terminus, the 459-residue chain is Cysteine--tRNA ligase (459 aa).

Zn(2+) is bound at residue Cys-29. The short motif at 31 to 41 is the 'HIGH' region element; it reads PTVYDRAHIGN. Zn(2+)-binding residues include Cys-209, His-234, and Glu-238. A 'KMSKS' region motif is present at residues 266–270; sequence KMSKS. Residue Lys-269 participates in ATP binding.

The protein belongs to the class-I aminoacyl-tRNA synthetase family. As to quaternary structure, monomer. The cofactor is Zn(2+).

Its subcellular location is the cytoplasm. It carries out the reaction tRNA(Cys) + L-cysteine + ATP = L-cysteinyl-tRNA(Cys) + AMP + diphosphate. The chain is Cysteine--tRNA ligase from Paramagnetospirillum magneticum (strain ATCC 700264 / AMB-1) (Magnetospirillum magneticum).